We begin with the raw amino-acid sequence, 203 residues long: SPbeta prophage-derived uncharacterized lipoprotein YonS (203 aa).

An N-terminal signal peptide occupies residues 1–21; that stretch reads MKLFKKLGILLLITSLILLAA. A lipid anchor (N-palmitoyl cysteine) is attached at C22. Residue C22 is the site of S-diacylglycerol cysteine attachment. Residues 27–46 show a composition bias toward low complexity; that stretch reads ESSSSSEDTNNATDTNTSES. Positions 27 to 57 are disordered; sequence ESSSSSEDTNNATDTNTSESQDISVNGPEKV.

It is found in the cell membrane. The sequence is that of SPbeta prophage-derived uncharacterized lipoprotein YonS (yonS) from Bacillus subtilis (strain 168).